Here is a 162-residue protein sequence, read N- to C-terminus: Protein-export protein SecB (162 aa).

The protein belongs to the SecB family. Homotetramer, a dimer of dimers. One homotetramer interacts with 1 SecA dimer.

It is found in the cytoplasm. Its function is as follows. One of the proteins required for the normal export of preproteins out of the cell cytoplasm. It is a molecular chaperone that binds to a subset of precursor proteins, maintaining them in a translocation-competent state. It also specifically binds to its receptor SecA. The protein is Protein-export protein SecB of Bradyrhizobium sp. (strain BTAi1 / ATCC BAA-1182).